The sequence spans 356 residues: UDP-N-acetylglucosamine--N-acetylmuramyl-(pentapeptide) pyrophosphoryl-undecaprenol N-acetylglucosamine transferase (356 aa).

Residues arginine 166, serine 196, and glutamine 290 each coordinate UDP-N-acetyl-alpha-D-glucosamine.

It belongs to the glycosyltransferase 28 family. MurG subfamily.

It is found in the cell membrane. It catalyses the reaction Mur2Ac(oyl-L-Ala-gamma-D-Glu-L-Lys-D-Ala-D-Ala)-di-trans,octa-cis-undecaprenyl diphosphate + UDP-N-acetyl-alpha-D-glucosamine = beta-D-GlcNAc-(1-&gt;4)-Mur2Ac(oyl-L-Ala-gamma-D-Glu-L-Lys-D-Ala-D-Ala)-di-trans,octa-cis-undecaprenyl diphosphate + UDP + H(+). It participates in cell wall biogenesis; peptidoglycan biosynthesis. Its function is as follows. Cell wall formation. Catalyzes the transfer of a GlcNAc subunit on undecaprenyl-pyrophosphoryl-MurNAc-pentapeptide (lipid intermediate I) to form undecaprenyl-pyrophosphoryl-MurNAc-(pentapeptide)GlcNAc (lipid intermediate II). This chain is UDP-N-acetylglucosamine--N-acetylmuramyl-(pentapeptide) pyrophosphoryl-undecaprenol N-acetylglucosamine transferase, found in Staphylococcus aureus (strain Mu3 / ATCC 700698).